The following is a 180-amino-acid chain: uncharacterized protein (180 aa).

Coiled-coil stretches lie at residues 3–82 (LKSL…QKIA) and 95–179 (REYE…EKYG).

This is an uncharacterized protein from Aquifex aeolicus (strain VF5).